A 319-amino-acid chain; its full sequence is Beta-ketoacyl-[acyl-carrier-protein] synthase III (319 aa).

Catalysis depends on residues cysteine 112 and histidine 246. The ACP-binding stretch occupies residues 247-251 (QANFR). Asparagine 276 is an active-site residue.

Belongs to the thiolase-like superfamily. FabH family. As to quaternary structure, homodimer.

Its subcellular location is the cytoplasm. It carries out the reaction malonyl-[ACP] + acetyl-CoA + H(+) = 3-oxobutanoyl-[ACP] + CO2 + CoA. The protein operates within lipid metabolism; fatty acid biosynthesis. In terms of biological role, catalyzes the condensation reaction of fatty acid synthesis by the addition to an acyl acceptor of two carbons from malonyl-ACP. Catalyzes the first condensation reaction which initiates fatty acid synthesis and may therefore play a role in governing the total rate of fatty acid production. Possesses both acetoacetyl-ACP synthase and acetyl transacylase activities. Its substrate specificity determines the biosynthesis of branched-chain and/or straight-chain of fatty acids. The polypeptide is Beta-ketoacyl-[acyl-carrier-protein] synthase III (Pseudoalteromonas atlantica (strain T6c / ATCC BAA-1087)).